Here is a 65-residue protein sequence, read N- to C-terminus: Toxin KTx8 (65 aa).

The first 25 residues, 1 to 25 (MNKVCFVVVLVLFVALAAYVSPIEG), serve as a signal peptide directing secretion. 3 disulfides stabilise this stretch: cysteine 31/cysteine 53, cysteine 38/cysteine 61, and cysteine 42/cysteine 63.

Belongs to the short scorpion toxin superfamily. Potassium channel inhibitor family. Alpha-KTx 11 subfamily. Expressed by the venom gland.

Its subcellular location is the secreted. This recombinant toxin inhibits the mammalian voltage-gated potassium channels Kv1.3/KCNA3 in vitro with an IC(50) of 26.40 nM. The sequence is that of Toxin KTx8 from Lychas mucronatus (Chinese swimming scorpion).